Consider the following 165-residue polypeptide: Phosphopantetheine adenylyltransferase (165 aa).

Substrate is bound at residue threonine 10. Residues 10–11 (TF) and histidine 18 each bind ATP. 3 residues coordinate substrate: lysine 42, leucine 75, and arginine 89. Residues 90–92 (GVR), glutamate 100, and 125–131 (YTYVAST) contribute to the ATP site.

It belongs to the bacterial CoaD family. As to quaternary structure, homohexamer. Mg(2+) serves as cofactor.

Its subcellular location is the cytoplasm. The enzyme catalyses (R)-4'-phosphopantetheine + ATP + H(+) = 3'-dephospho-CoA + diphosphate. The protein operates within cofactor biosynthesis; coenzyme A biosynthesis; CoA from (R)-pantothenate: step 4/5. Its function is as follows. Reversibly transfers an adenylyl group from ATP to 4'-phosphopantetheine, yielding dephospho-CoA (dPCoA) and pyrophosphate. The polypeptide is Phosphopantetheine adenylyltransferase (Chlorobaculum tepidum (strain ATCC 49652 / DSM 12025 / NBRC 103806 / TLS) (Chlorobium tepidum)).